Reading from the N-terminus, the 834-residue chain is Leucine--tRNA ligase (834 aa).

A 'HIGH' region motif is present at residues 42–52; sequence PYPSGKLHMGH. The short motif at 619–623 is the 'KMSKS' region element; that stretch reads KMSKS. Lys-622 provides a ligand contact to ATP.

The protein belongs to the class-I aminoacyl-tRNA synthetase family.

It is found in the cytoplasm. The catalysed reaction is tRNA(Leu) + L-leucine + ATP = L-leucyl-tRNA(Leu) + AMP + diphosphate. The protein is Leucine--tRNA ligase of Actinobacillus pleuropneumoniae serotype 7 (strain AP76).